Here is a 634-residue protein sequence, read N- to C-terminus: DNA-directed RNA polymerase subunit gamma (634 aa).

Positions 74, 76, 89, and 92 each coordinate Zn(2+). Positions 471, 473, and 475 each coordinate Mg(2+).

Belongs to the RNA polymerase beta' chain family. RpoC1 subfamily. As to quaternary structure, in cyanobacteria the RNAP catalytic core is composed of 2 alpha, 1 beta, 1 beta', 1 gamma and 1 omega subunit. When a sigma factor is associated with the core the holoenzyme is formed, which can initiate transcription. Mg(2+) serves as cofactor. Requires Zn(2+) as cofactor.

The catalysed reaction is RNA(n) + a ribonucleoside 5'-triphosphate = RNA(n+1) + diphosphate. DNA-dependent RNA polymerase catalyzes the transcription of DNA into RNA using the four ribonucleoside triphosphates as substrates. The protein is DNA-directed RNA polymerase subunit gamma of Prochlorococcus marinus (strain MIT 9313).